An 874-amino-acid polypeptide reads, in one-letter code: Alanine--tRNA ligase (874 aa).

4 residues coordinate Zn(2+): histidine 562, histidine 566, cysteine 664, and histidine 668.

This sequence belongs to the class-II aminoacyl-tRNA synthetase family. Zn(2+) serves as cofactor.

It is found in the cytoplasm. It catalyses the reaction tRNA(Ala) + L-alanine + ATP = L-alanyl-tRNA(Ala) + AMP + diphosphate. In terms of biological role, catalyzes the attachment of alanine to tRNA(Ala) in a two-step reaction: alanine is first activated by ATP to form Ala-AMP and then transferred to the acceptor end of tRNA(Ala). Also edits incorrectly charged Ser-tRNA(Ala) and Gly-tRNA(Ala) via its editing domain. This Neisseria meningitidis serogroup A / serotype 4A (strain DSM 15465 / Z2491) protein is Alanine--tRNA ligase.